Consider the following 91-residue polypeptide: Cytochrome b-c1 complex subunit 10, mitochondrial (91 aa).

Over 1–34 (MFATSILRSAYPAYKSPYGPKYQYQPHIDGITPK) the chain is Mitochondrial matrix. A helical transmembrane segment spans residues 35–58 (QLVRILPTAAAWTGVALFAVVYYA). Residues 59–91 (SGIPRLRRDVLQRIPYLGERYFVNEIPASDNPF) are Mitochondrial intermembrane-facing.

It belongs to the UQCR11/QCR10 family. As to quaternary structure, component of the ubiquinol-cytochrome c oxidoreductase (cytochrome b-c1 complex, complex III, CIII), a multisubunit enzyme composed of 10 subunits. The complex is composed of 3 respiratory subunits cytochrome b (cob), cytochrome c1 (cyt-1) and Rieske protein (fes-1), 2 core protein subunits pep and ucr-1, and 5 low-molecular weight protein subunits qcr6, qcr7, qcr8, qcr9 and probably NCU16844/qcr10. The complex exists as an obligatory dimer and forms supercomplexes (SCs) in the inner mitochondrial membrane with NADH-ubiquinone oxidoreductase (complex I, CI) and cytochrome c oxidase (complex IV, CIV), resulting in different assemblies (supercomplexes SCI(1)III(2), SCIII(2)IV(1) and SCIII(2)IV(2) as well as higher order I(x)III(y)IV(z) megacomplexes).

The protein resides in the mitochondrion inner membrane. Its function is as follows. Component of the ubiquinol-cytochrome c oxidoreductase, a multisubunit transmembrane complex that is part of the mitochondrial electron transport chain which drives oxidative phosphorylation. The respiratory chain contains 3 multisubunit complexes succinate dehydrogenase (complex II, CII), ubiquinol-cytochrome c oxidoreductase (cytochrome b-c1 complex, complex III, CIII) and cytochrome c oxidase (complex IV, CIV), that cooperate to transfer electrons derived from NADH and succinate to molecular oxygen, creating an electrochemical gradient over the inner membrane that drives transmembrane transport and the ATP synthase. The cytochrome b-c1 complex catalyzes electron transfer from ubiquinol to cytochrome c, linking this redox reaction to translocation of protons across the mitochondrial inner membrane, with protons being carried across the membrane as hydrogens on the quinol. In the process called Q cycle, 2 protons are consumed from the matrix, 4 protons are released into the intermembrane space and 2 electrons are passed to cytochrome c. In Neurospora crassa (strain ATCC 24698 / 74-OR23-1A / CBS 708.71 / DSM 1257 / FGSC 987), this protein is Cytochrome b-c1 complex subunit 10, mitochondrial.